An 865-amino-acid polypeptide reads, in one-letter code: Ribosome biogenesis protein BOP1 homolog (865 aa).

Disordered regions lie at residues methionine 1–glycine 195 and lysine 207–isoleucine 240. 3 stretches are compositionally biased toward acidic residues: residues leucine 30 to tyrosine 44, asparagine 57 to leucine 79, and aspartate 87 to alanine 159. The segment covering lysine 160–glutamine 180 has biased composition (basic and acidic residues). WD repeat units lie at residues glycine 526–threonine 565, proline 567–valine 607, threonine 651–proline 693, lysine 696–lysine 734, proline 737–glutamine 776, isoleucine 780–glutamine 819, and valine 835–threonine 865.

This sequence belongs to the WD repeat BOP1/ERB1 family.

It is found in the nucleus. The protein localises to the nucleolus. It localises to the nucleoplasm. In terms of biological role, required for maturation of ribosomal RNAs and formation of the large ribosomal subunit. This Anopheles gambiae (African malaria mosquito) protein is Ribosome biogenesis protein BOP1 homolog.